A 302-amino-acid polypeptide reads, in one-letter code: uncharacterized protein (302 aa).

Residues 1 to 52 (MLKKLKVVRLLVNHLIYCPSIFMPYSKNMKKKIWNKTSLGALFMLFGTALTA) form the signal peptide.

The protein belongs to the MG439/MG440 family.

This is an uncharacterized protein from Mycoplasma pneumoniae (strain ATCC 29342 / M129 / Subtype 1) (Mycoplasmoides pneumoniae).